The chain runs to 218 residues: MRLILLGPPGAGKGTQAAFLTQHYGIPQISTGNMLRAAVKAGTPLGLEAKKVMDAGGLVSDDLIIGLVRDRLTQPDCANGYLFDGFPRTIPQADALKSAGIALDYVVEIEVPESDIIERMSGRRVHPASGRSYHVRFNPPKAEGVDDVTGEPLVQRDDDREETVRHRLNVYQNQTRPLVDYYSSWAQSDAAAAPKYRKISGVGSVDEIKSRLSQALQS.

An ATP-binding site is contributed by 10 to 15 (GAGKGT). Residues 30–59 (STGNMLRAAVKAGTPLGLEAKKVMDAGGLV) are NMP. AMP is bound by residues threonine 31, arginine 36, 57–59 (GLV), 85–88 (GFPR), and glutamine 92. The segment at 122-159 (GRRVHPASGRSYHVRFNPPKAEGVDDVTGEPLVQRDDD) is LID. ATP-binding positions include arginine 123 and 132 to 133 (SY). AMP is bound by residues arginine 156 and arginine 167. Position 203 (glycine 203) interacts with ATP.

This sequence belongs to the adenylate kinase family. In terms of assembly, monomer.

The protein localises to the cytoplasm. The enzyme catalyses AMP + ATP = 2 ADP. It functions in the pathway purine metabolism; AMP biosynthesis via salvage pathway; AMP from ADP: step 1/1. Functionally, catalyzes the reversible transfer of the terminal phosphate group between ATP and AMP. Plays an important role in cellular energy homeostasis and in adenine nucleotide metabolism. The sequence is that of Adenylate kinase from Bordetella parapertussis (strain 12822 / ATCC BAA-587 / NCTC 13253).